Consider the following 285-residue polypeptide: Octanoyltransferase (285 aa).

One can recognise a BPL/LPL catalytic domain in the interval 50–277 (LRTPDELWIV…NIAQRHAGDI (228 aa)). Substrate contacts are provided by residues 89-96 (RGGQVTWH), 189-191 (SLG), and 202-204 (GIA). The active-site Acyl-thioester intermediate is the cysteine 220.

It belongs to the LipB family.

Its subcellular location is the cytoplasm. The catalysed reaction is octanoyl-[ACP] + L-lysyl-[protein] = N(6)-octanoyl-L-lysyl-[protein] + holo-[ACP] + H(+). Its pathway is protein modification; protein lipoylation via endogenous pathway; protein N(6)-(lipoyl)lysine from octanoyl-[acyl-carrier-protein]: step 1/2. Its function is as follows. Catalyzes the transfer of endogenously produced octanoic acid from octanoyl-acyl-carrier-protein onto the lipoyl domains of lipoate-dependent enzymes. Lipoyl-ACP can also act as a substrate although octanoyl-ACP is likely to be the physiological substrate. The protein is Octanoyltransferase of Psychrobacter cryohalolentis (strain ATCC BAA-1226 / DSM 17306 / VKM B-2378 / K5).